The chain runs to 715 residues: Fatty acid oxidation complex subunit alpha (715 aa).

The segment at Met1–Pro190 is enoyl-CoA hydratase. Residues Gly306 to Gly714 form a 3-hydroxyacyl-CoA dehydrogenase region.

In the N-terminal section; belongs to the enoyl-CoA hydratase/isomerase family. It in the central section; belongs to the 3-hydroxyacyl-CoA dehydrogenase family. In terms of assembly, heterotetramer of two alpha chains (FadJ) and two beta chains (FadI).

The protein localises to the cytoplasm. It catalyses the reaction a (3S)-3-hydroxyacyl-CoA = a (2E)-enoyl-CoA + H2O. It carries out the reaction a 4-saturated-(3S)-3-hydroxyacyl-CoA = a (3E)-enoyl-CoA + H2O. The catalysed reaction is a (3S)-3-hydroxyacyl-CoA + NAD(+) = a 3-oxoacyl-CoA + NADH + H(+). The enzyme catalyses (3S)-3-hydroxybutanoyl-CoA = (3R)-3-hydroxybutanoyl-CoA. It participates in lipid metabolism; fatty acid beta-oxidation. Catalyzes the formation of a hydroxyacyl-CoA by addition of water on enoyl-CoA. Also exhibits 3-hydroxyacyl-CoA epimerase and 3-hydroxyacyl-CoA dehydrogenase activities. The polypeptide is Fatty acid oxidation complex subunit alpha (Salmonella typhi).